Here is a 433-residue protein sequence, read N- to C-terminus: 23S rRNA (uracil(1939)-C(5))-methyltransferase RlmD (433 aa).

One can recognise a TRAM domain in the interval 1 to 53 (MPTAVIESLDHEGRGIARVEGKAVFIEGGLPGETVEYRVLRSKPNYEQAEATR). [4Fe-4S] cluster-binding residues include C66, C72, C75, and C154. The S-adenosyl-L-methionine site is built by Q263, F292, N297, E313, N341, and D362. The active-site Nucleophile is C389.

This sequence belongs to the class I-like SAM-binding methyltransferase superfamily. RNA M5U methyltransferase family. RlmD subfamily.

It catalyses the reaction uridine(1939) in 23S rRNA + S-adenosyl-L-methionine = 5-methyluridine(1939) in 23S rRNA + S-adenosyl-L-homocysteine + H(+). Catalyzes the formation of 5-methyl-uridine at position 1939 (m5U1939) in 23S rRNA. The polypeptide is 23S rRNA (uracil(1939)-C(5))-methyltransferase RlmD (Azoarcus sp. (strain BH72)).